The following is a 385-amino-acid chain: Serpin-Z1 (385 aa).

The interval 317 to 341 (GAEAAAATADGDCGCSLDFVEPPKK) is RCL.

The protein belongs to the serpin family.

Functionally, probable serine protease inhibitor. This chain is Serpin-Z1, found in Arabidopsis thaliana (Mouse-ear cress).